We begin with the raw amino-acid sequence, 387 residues long: MSKTQILHISDTHLGKRQYNLDFREQDVYDTFSQLIDIAIKEHVDGIIHTGDLFDINDPPNKAEIVAIRELKRLKEAGIPFIVIAGDHDSPKKFTAIYPQKILEEFDLIKFLSKPDTPYKLGEITIYGISHVPNVAKERLKELLSRLKPENKKSILLLHQGLKEVLPYEGAWQIQIDDLPKAFSYYALGHFHTRRVFQLDGGRIIEIAGSPDILREEEIEGYEKEGKGATLIDFSGDIPTIQKINIDVRKQYVVTLNTNNLREEIRKLREKYDTNNEKKPIFHIILEGKSIPKNVLMKELQEINNFAPYWRIYKDNTKEKDEKDVKIDLPTDTTIENLIYNYLVKIANFSETEARMIVDIINRADEREYVKEELMKMIGVENDNKKN.

The Mn(2+) site is built by D11, H13, D52, and D87. Residue H88 is the Proton donor of the active site. Positions 159, 190, and 192 each coordinate Mn(2+).

The protein belongs to the MRE11/RAD32 family. As to quaternary structure, homodimer. Forms a heterotetramer composed of two Mre11 subunits and two Rad50 subunits. Interacts with HerA. Requires Mn(2+) as cofactor.

Its activity is regulated as follows. Nuclease activity is regulated by Rad50. Part of the Rad50/Mre11 complex, which is involved in the early steps of DNA double-strand break (DSB) repair. The complex may facilitate opening of the processed DNA ends to aid in the recruitment of HerA and NurA. Mre11 binds to DSB ends and has both double-stranded 3'-5' exonuclease activity and single-stranded endonuclease activity. The chain is DNA double-strand break repair protein Mre11 from Sulfurisphaera tokodaii (strain DSM 16993 / JCM 10545 / NBRC 100140 / 7) (Sulfolobus tokodaii).